We begin with the raw amino-acid sequence, 373 residues long: Probable neutral protease 2 homolog MCYG_05201 (373 aa).

The signal sequence occupies residues 1 to 19 (MQFFTALAAVGALVAPALA). The propeptide occupies 20 to 187 (LPTQVPANQS…AHIVGTIDKR (168 aa)). 2 cysteine pairs are disulfide-bonded: cysteine 195/cysteine 265 and cysteine 272/cysteine 290. Histidine 314 serves as a coordination point for Zn(2+). Residue glutamate 315 is part of the active site. Histidine 318 and aspartate 329 together coordinate Zn(2+).

It belongs to the peptidase M35 family. Zn(2+) serves as cofactor.

It localises to the secreted. It carries out the reaction Preferential cleavage of bonds with hydrophobic residues in P1'. Also 3-Asn-|-Gln-4 and 8-Gly-|-Ser-9 bonds in insulin B chain.. Probable secreted metalloprotease that shows high activities on basic nuclear substrates such as histone and protamine. May be involved in virulence. This Arthroderma otae (strain ATCC MYA-4605 / CBS 113480) (Microsporum canis) protein is Probable neutral protease 2 homolog MCYG_05201.